The chain runs to 276 residues: Undecaprenyl-diphosphatase (276 aa).

6 helical membrane-spanning segments follow: residues 43–63, 85–105, 109–129, 183–203, 214–234, and 249–269; these read RAMA…VWEF, GNLL…ADLI, LFNP…MLWA, AATE…AVYS, ADLP…MIAV, and FAWY…FGWV.

This sequence belongs to the UppP family.

It is found in the cell inner membrane. The catalysed reaction is di-trans,octa-cis-undecaprenyl diphosphate + H2O = di-trans,octa-cis-undecaprenyl phosphate + phosphate + H(+). Functionally, catalyzes the dephosphorylation of undecaprenyl diphosphate (UPP). Confers resistance to bacitracin. This chain is Undecaprenyl-diphosphatase, found in Pseudomonas putida (strain GB-1).